The sequence spans 442 residues: Transcriptional coactivator YAP1 (442 aa).

Ser-21, Ser-69, and Ser-87 each carry phosphoserine; by LATS1 and LATS2. Disordered stretches follow at residues 51-89 (LPDS…HSSP) and 97-116 (VSPG…QHLR). Ser-119 is modified (phosphoserine; by LATS1 and LATS2). WW domains are found at residues 126–159 (MPLP…DPRK) and 186–219 (GPLP…DPRL). The tract at residues 230–254 (ISQSAPVKQGSQLPSSPQSGVMSGN) is disordered. Over residues 238-249 (QGSQLPSSPQSG) the composition is skewed to low complexity. The transactivation domain stretch occupies residues 247-442 (QSGVMSGNNP…IDKENFLTWL (196 aa)). Positions 258 to 279 (RLQQIHIEKERLRIKQELLRQR) form a coiled coil. A disordered region spans residues 286-374 (RNQLPTSMEQ…DTLGPGSMAT (89 aa)). Polar residues-rich tracts occupy residues 288-304 (QLPT…NPVS), 313-329 (RNMT…SGTY), and 337-347 (DSGLSMSSYSV).

Belongs to the YAP1 family. Post-translationally, phosphorylated by lats1 and lats2; leading to cytoplasmic translocation and inactivation. Expressed in the notochord, brain, eyes, branchial arches and pectoral fins.

Its subcellular location is the cytoplasm. The protein resides in the nucleus. It is found in the cell junction. The protein localises to the tight junction. It localises to the cell membrane. Its function is as follows. Transcriptional regulator which can act both as a coactivator and a corepressor and is the critical downstream regulatory target in the Hippo signaling pathway that plays a pivotal role in organ size control and tumor suppression by restricting proliferation and promoting apoptosis. Required for expansion of the neural plate and neural plate border zone progenitor pools. Acts as a direct regulator of pax3 expression via interaction with tead1. Plays a key role in tissue tension and 3D tissue shape by regulating cortical actomyosin network formation. This is Transcriptional coactivator YAP1 (yap1) from Danio rerio (Zebrafish).